The chain runs to 679 residues: MISATRAAAARLVGTAASRTPAAARHQDGWNGLSHEAFRFVSRRDYASETIKGAVVGIDLGTTNSCVAVMEGKQAKVLENAEGARTTPSVVAFTADGERLVGMPAKRQAVTNPNNTFYATKRLIGRRYDDPEVQKDTKNVPFKIVRASNGDAWVEAHGKLYSPSQIGAFVLMKMKETAENYLGHTAKNAVITVPAYFNDSQRQATKDAGQISGLNVLRVINEPTAAALAYGLDKSEDKIIAVYDLGGGTFDISILEIQKGVFEVKSTNGDTFLGGEDFDQALLRHIVKEFKRETGVDLTKDNMALQRVREAAEKAKCELSSSVQTDINLPYLTMDASGPKHLNMKLTRAQFEGIVTDLIKRTIAPCQKAMQDAEVSKSDIGEVILVGGMTRMPKVQQTVQDLFGRAPSKAVNPDEAVAIGAAIQGGVLAGDVTDVLLLDVTPLSLGIETLGGVFTKLINRNTTIPTKKSQVFSTAADGQTQVEIKVCQGEREMAGDNKLLGQFTLIGIPPAPRGVPQIEVTFDLDANGIVHVSAKDKGTGREQQIVIQSSGGLSKDDIENMVKNAEKYAEEDRRKKERVEAVNMAEGIIHDTETKMEEFKDQLPADECNKLKEEISKMRELLARKDSETGENIRQAASSLQQASLKLFEMAYKKMASEREGSGSSGTGEQKEDQKEEKQ.

A mitochondrion-targeting transit peptide spans 1–46; the sequence is MISATRAAAARLVGTAASRTPAAARHQDGWNGLSHEAFRFVSRRDY. Residues 1-432 form an interaction with NFS1 region; it reads MISATRAAAA…IQGGVLAGDV (432 aa). Residues T63 and N64 each contribute to the ADP site. The tract at residues 63-431 is nucleotide-binding domain (NBD); sequence TNSCVAVMEG…AIQGGVLAGD (369 aa). An N6-acetyllysine modification is found at K76. T87 carries the phosphothreonine modification. N6-acetyllysine; alternate is present on residues K135 and K138. Residues K135 and K138 each carry the N6-succinyllysine; alternate modification. The residue at position 143 (K143) is an N6-acetyllysine. An N6-acetyllysine; alternate modification is found at K206. The residue at position 206 (K206) is an N6-succinyllysine; alternate. At K206 the chain carries N6-malonyllysine; alternate. An N6-acetyllysine mark is found at K234 and K288. K300 carries the N6-acetyllysine; alternate modification. K300 is subject to N6-succinyllysine; alternate. ADP contacts are provided by E313, K316, and S320. At K360 the chain carries N6-acetyllysine; alternate. K360 is subject to N6-succinyllysine; alternate. K368 carries the N6-succinyllysine modification. Positions 388 and 391 each coordinate ADP. K394 carries the N6-succinyllysine modification. A Phosphoserine modification is found at S408. Residues 432–441 are interdomain linker; the sequence is VTDVLLLDVT. An interaction with FXN and ISCU region spans residues 432 to 679; that stretch reads VTDVLLLDVT…QKEDQKEEKQ (248 aa). A substrate-binding domain (SBD) region spans residues 442–679; sequence PLSLGIETLG…QKEDQKEEKQ (238 aa). An Omega-N-methylarginine modification is found at R513. N6-acetyllysine; alternate occurs at positions 567 and 600. N6-succinyllysine; alternate occurs at positions 567 and 600. K610 carries the post-translational modification N6-succinyllysine. N6-acetyllysine is present on K612. An N6-acetyllysine; alternate modification is found at K646. At K646 the chain carries N6-succinyllysine; alternate. The tract at residues 656–679 is disordered; sequence ASEREGSGSSGTGEQKEDQKEEKQ. Positions 669–679 are enriched in basic and acidic residues; the sequence is EQKEDQKEEKQ.

It belongs to the heat shock protein 70 family. In terms of assembly, interacts strongly with the intermediate form of FXN and weakly with its mature form. Interacts with HSCB. Associates with the mitochondrial contact site and cristae organizing system (MICOS) complex, composed of at least MICOS10/MIC10, CHCHD3/MIC19, CHCHD6/MIC25, APOOL/MIC27, IMMT/MIC60, APOO/MIC23/MIC26 and QIL1/MIC13. This complex was also known under the names MINOS or MitOS complex. The MICOS complex associates with mitochondrial outer membrane proteins SAMM50, MTX1, MTX2 and DNAJC11, mitochondrial inner membrane protein TMEM11 and with HSPA9. Interacts with DNLZ, the interaction is required to prevent self-aggregation. Interacts with TESPA1. Interacts with PDPN. Interacts with NFU1, NFS1 and ISCU. Interacts with TP53; the interaction promotes TP53 degradation. Interacts (via SBD domain) with UBXN2A; the interaction with UBXN2A inhibits HSPA9/MOT-2 interaction with and degradation of TP53, thereby promotes TP53 translocation to the nucleus. Interacts with ITPR1 AND VDAC1; this interaction couples ITPR1 to VDAC1. Component of the TIM23 mitochondrial inner membrane pre-sequence translocase complex.

Its subcellular location is the mitochondrion. It localises to the nucleus. The protein localises to the nucleolus. It is found in the cytoplasm. The protein resides in the mitochondrion matrix. The enzyme catalyses ATP + H2O = ADP + phosphate + H(+). Its activity is regulated as follows. The chaperone activity is regulated by ATP-induced allosteric coupling of the nucleotide-binding (NBD) and substrate-binding (SBD) domains. ATP binding in the NBD leads to a conformational change in the NBD, which is transferred through the interdomain linker (IDL) to the substrate-binding domain (SBD). This elicits a reduced substrate affinity and a faster substrate exchange rate. Upon hydrolysis of ATP to ADP, the protein undergoes a conformational change that increases its affinity for substrate proteins. It cycles through repeated phases of ATP hydrolysis and nucleotide exchange, facilitating repeated cycles of substrate binding and release. Functions in collaboration with co-chaperones. Functions with the co-chaperone, DNLZ, to maintain solubility and regulate ATP hydrolysis. Nucleotide exchange factors, GRPEL1 and GRPEL2, accelerate nucleotide exchange. Functionally, mitochondrial chaperone that plays a key role in mitochondrial protein import, folding, and assembly. Plays an essential role in the protein quality control system, the correct folding of proteins, the re-folding of misfolded proteins, and the targeting of proteins for subsequent degradation. These processes are achieved through cycles of ATP binding, ATP hydrolysis, and ADP release, mediated by co-chaperones. In mitochondria, it associates with the TIM (translocase of the inner membrane) protein complex to assist in the import and folding of mitochondrial proteins. Plays an important role in mitochondrial iron-sulfur cluster (ISC) biogenesis, interacts with and stabilizes ISC cluster assembly proteins FXN, NFU1, NFS1 and ISCU. Regulates erythropoiesis via stabilization of ISC assembly. Regulates mitochondrial calcium-dependent apoptosis by coupling two calcium channels, ITPR1 and VDAC1, at the mitochondria-associated endoplasmic reticulum (ER) membrane to facilitate calcium transport from the ER lumen to the mitochondria intermembrane space, providing calcium for the downstream calcium channel MCU, which releases it into the mitochondrial matrix. Although primarily located in the mitochondria, it is also found in other cellular compartments. In the cytosol, it associates with proteins involved in signaling, apoptosis, or senescence. It may play a role in cell cycle regulation via its interaction with and promotion of degradation of TP53. May play a role in the control of cell proliferation and cellular aging. Protects against reactive oxygen species (ROS). Extracellular HSPA9 plays a cytoprotective role by preventing cell lysis following immune attack by the membrane attack complex by disrupting formation of the complex. This chain is Stress-70 protein, mitochondrial, found in Cricetulus griseus (Chinese hamster).